The sequence spans 539 residues: Transcription factor prr1 (539 aa).

A DNA-binding region spans residues 7–111 (SSDFVRKLFN…LLDNIKRKAP (105 aa)). Position 221 is a phosphothreonine (T221). A Phosphoserine modification is found at S223. Over residues 251-263 (GTAQPSLYNTPSS) the composition is skewed to polar residues. A disordered region spans residues 251–281 (GTAQPSLYNTPSSDYELANQEKPADSMASAA). The 115-residue stretch at 369–483 (RILLVEDDEL…TLLQLLKKQL (115 aa)) folds into the Response regulatory domain. A 4-aspartylphosphate modification is found at D418.

The protein in the N-terminal section; belongs to the HSF family.

It is found in the nucleus. Its function is as follows. Involved in oxidative stress. Transcription factor that acts upon trr1 and ctt1. This Schizosaccharomyces pombe (strain 972 / ATCC 24843) (Fission yeast) protein is Transcription factor prr1 (prr1).